The following is a 187-amino-acid chain: Oleosin Zm-II (187 aa).

A2 bears the N-acetylalanine mark. The segment at 2 to 51 (ADRDRSGIYGGAHATYGQQQQQGGGGRPMGEQVKKGMLHDKGPTASQALT) is polar. Positions 17–42 (YGQQQQQGGGGRPMGEQVKKGMLHDK) are disordered. Residues 33-42 (QVKKGMLHDK) show a composition bias toward basic and acidic residues. Transmembrane regions (helical) follow at residues 50–70 (LTVA…GLAL), 83–103 (VFLI…TAVM), and 104–124 (GFLT…CLAN). The tract at residues 52 to 123 (VATLFPLGGL…GGLSSLTCLA (72 aa)) is hydrophobic. Residues 155–169 (TAQAGQAIQGRAQEA) show a composition bias toward low complexity. Residues 155-187 (TAQAGQAIQGRAQEAGTGGGAGAGAGGGGRASS) are disordered. Positions 170–187 (GTGGGAGAGAGGGGRASS) are enriched in gly residues.

It belongs to the oleosin family. In terms of processing, the N-terminus is blocked. As to expression, found in embryonic axis, scutellum, and aleurone layer.

The protein localises to the lipid droplet. Its subcellular location is the membrane. In terms of biological role, may have a structural role to stabilize the lipid body during desiccation of the seed by preventing coalescence of the oil. Probably interacts with both lipid and phospholipid moieties of lipid bodies. May also provide recognition signals for specific lipase anchorage in lipolysis during seedling growth. The protein is Oleosin Zm-II (OLE18) of Zea mays (Maize).